The primary structure comprises 530 residues: UDP-glucuronosyltransferase 2B7 (530 aa).

A signal peptide spans 1–17 (MPQKWISALLLLQISFC). Residue Asn316 is glycosylated (N-linked (GlcNAc...) asparagine). Residues 374-380 (THGGANG) and Glu400 contribute to the UDP-alpha-D-glucuronate site. The chain crosses the membrane as a helical span at residues 496 to 516 (IGFLLACVLAIVLLAVKCCLF).

It belongs to the UDP-glycosyltransferase family.

Its subcellular location is the endoplasmic reticulum membrane. It catalyses the reaction glucuronate acceptor + UDP-alpha-D-glucuronate = acceptor beta-D-glucuronoside + UDP + H(+). The catalysed reaction is 17alpha-estradiol + UDP-alpha-D-glucuronate = 17alpha-estradiol 17-O-(beta-D-glucuronate) + UDP + H(+). It carries out the reaction 17beta-estradiol + UDP-alpha-D-glucuronate = 17beta-estradiol 17-O-(beta-D-glucuronate) + UDP + H(+). The enzyme catalyses 2-hydroxy-17beta-estradiol + UDP-alpha-D-glucuronate = 2-hydroxy-17beta-estradiol 3-O-(beta-D-glucuronate) + UDP + H(+). It catalyses the reaction 4-hydroxy-17beta-estradiol + UDP-alpha-D-glucuronate = 17beta-estradiol 4-O-(beta-D-glucuronate) + UDP + H(+). The catalysed reaction is 4-hydroxyestrone + UDP-alpha-D-glucuronate = estrone 4-O-(beta-D-glucuronate) + UDP + H(+). It carries out the reaction 16alpha-hydroxyestrone + UDP-alpha-D-glucuronate = 16alpha-hydroxyestrone 16-O-(beta-D-glucuronate) + UDP + H(+). The enzyme catalyses 16alpha,17beta-estriol + UDP-alpha-D-glucuronate = 16alpha,17beta-estriol 16-O-(beta-D-glucuronate) + UDP + H(+). It catalyses the reaction 16beta,17beta-estriol + UDP-alpha-D-glucuronate = 16beta,17beta-estriol 16-O-(beta-D-glucuronate) + UDP + H(+). The catalysed reaction is 16alpha,17alpha-estriol + UDP-alpha-D-glucuronate = 16alpha,17alpha-estriol 16-O-(beta-D-glucuronate) + UDP + H(+). It carries out the reaction 16alpha,17alpha-estriol + UDP-alpha-D-glucuronate = 16alpha,17alpha-estriol 17-O-(beta-D-glucuronate) + UDP + H(+). The enzyme catalyses epitestosterone + UDP-alpha-D-glucuronate = epitestosterone 17-O-(beta-D-glucuronate) + UDP + H(+). It catalyses the reaction hyodeoxycholate + UDP-alpha-D-glucuronate = hyodeoxycholate 6-O-(beta-D-glucuronate) + UDP + H(+). The catalysed reaction is hyocholate + UDP-alpha-D-glucuronate = hyocholate 6-O-(beta-D-glucuronate) + UDP + H(+). It carries out the reaction all-trans-retinoate + UDP-alpha-D-glucuronate = all-trans-retinoyl-1-O-(beta-D-glucuronate) + UDP. The enzyme catalyses all-trans-4-hydroxyretinoate + UDP-alpha-D-glucuronate = all-trans-4-hydroxy-4-O-(beta-D-glucuronide)-retinoate + UDP + H(+). It catalyses the reaction (E)-ferulate + UDP-alpha-D-glucuronate = (E)-ferulic acid beta-D-glucuronate ester + UDP. The catalysed reaction is 8-iso-prostaglandin F2alpha + UDP-alpha-D-glucuronate = 8-iso-prostaglandin F2alpha-glucuronide + UDP + H(+). It carries out the reaction 5-epi-5-F2t-IsoP + UDP-alpha-D-glucuronate = 5-epi-5-F2t-IsoP-glucuronide + UDP + H(+). The enzyme catalyses (5Z,8Z,11Z,14Z)-eicosatetraenoate + UDP-alpha-D-glucuronate = O-[(5Z),(8Z),(11Z),(14Z)-eicosatetraenoyl]-beta-D-glucuronate + UDP. It catalyses the reaction 15-hydroxy-(5Z,8Z,11Z,13E)-eicosatetraenoate + UDP-alpha-D-glucuronate = 15-O-(beta-D-glucuronosyl)-(5Z,8Z,11Z,14Z)-eicosatetraenoate + UDP + H(+). The catalysed reaction is 20-hydroxy-(5Z,8Z,11Z,14Z)-eicosatetraenoate + UDP-alpha-D-glucuronate = 20-O-(beta-D-glucuronosyl)-(5Z,8Z,11Z,14Z)-eicosatetraenoate + UDP + H(+). It carries out the reaction (E)-ferulate + UDP-alpha-D-glucuronate = (E)-4-O-(beta-D-glucuronosyl)-ferulate + UDP + H(+). The enzyme catalyses prostaglandin B1 + UDP-alpha-D-glucuronate = 15-O-(beta-D-glucuronosyl)-prostaglandin B1 + UDP + H(+). It catalyses the reaction mycophenolate + UDP-alpha-D-glucuronate = mycophenolic acid O-acyl-beta-D-glucuronide + UDP. The catalysed reaction is losartan + UDP-alpha-D-glucuronate = losartan-2-N-beta-D-glucuronide + UDP. It carries out the reaction candesartan + UDP-alpha-D-glucuronate = candesartan O-beta-D-glucuronoside + UDP. The enzyme catalyses candesartan + UDP-alpha-D-glucuronate = candesartan-2-N-beta-D-glucuronide + UDP. It catalyses the reaction zolasartan + UDP-alpha-D-glucuronate = zolarsartan O-beta-D-glucuronoside + UDP. Its function is as follows. UDP-glucuronosyltransferase (UGT) that catalyzes phase II biotransformation reactions in which lipophilic substrates are conjugated with glucuronic acid to increase the metabolite's water solubility, thereby facilitating excretion into either the urine or bile. Essential for the elimination and detoxification of drugs, xenobiotics and endogenous compounds. Catalyzes the glucuronidation of endogenous steroid hormones such as androgens (epitestosterone, androsterone) and estrogens (estradiol, epiestradiol, estriol, catechol estrogens). Also regulates the levels of retinoic acid, a major metabolite of vitamin A involved in apoptosis, cellular growth and differentiation, and embryonic development. Contributes to bile acid (BA) detoxification by catalyzing the glucuronidation of BA substrates, which are natural detergents for dietary lipids absorption. Involved in the glucuronidation of arachidonic acid (AA) and AA-derived eicosanoids including 15-HETE, 20-HETE, PGE2, PGB1 and F2-isoprostanes (8-iso-PGF2alpha and 5-epi-5-F2t-IsoP). Involved in the glucuronidation of the phytochemical ferulic acid at the phenolic or the carboxylic acid group. Involved in the glucuronidation of the AGTR1 angiotensin receptor antagonist losartan, caderastan and zolarsatan, drugs which can inhibit the effect of angiotensin II. Also metabolizes mycophenolate, an immunosuppressive agent. The sequence is that of UDP-glucuronosyltransferase 2B7 from Rattus norvegicus (Rat).